We begin with the raw amino-acid sequence, 914 residues long: Protein translocase subunit SecA (914 aa).

ATP contacts are provided by residues Q87, 105 to 109 (GEGKT), and D500. The Zn(2+) site is built by C898, C900, C909, and H910.

It belongs to the SecA family. In terms of assembly, monomer and homodimer. Part of the essential Sec protein translocation apparatus which comprises SecA, SecYEG and auxiliary proteins SecDF-YajC and YidC. Requires Zn(2+) as cofactor.

Its subcellular location is the cell inner membrane. The protein localises to the cytoplasm. It catalyses the reaction ATP + H2O + cellular proteinSide 1 = ADP + phosphate + cellular proteinSide 2.. Its function is as follows. Part of the Sec protein translocase complex. Interacts with the SecYEG preprotein conducting channel. Has a central role in coupling the hydrolysis of ATP to the transfer of proteins into and across the cell membrane, serving as an ATP-driven molecular motor driving the stepwise translocation of polypeptide chains across the membrane. This Acidithiobacillus ferrooxidans (strain ATCC 23270 / DSM 14882 / CIP 104768 / NCIMB 8455) (Ferrobacillus ferrooxidans (strain ATCC 23270)) protein is Protein translocase subunit SecA.